Consider the following 130-residue polypeptide: Protein ApaG (130 aa).

The ApaG domain occupies 3-127 (SQTTRDIEVT…FSLDSPHEKP (125 aa)).

The polypeptide is Protein ApaG (Paramagnetospirillum magneticum (strain ATCC 700264 / AMB-1) (Magnetospirillum magneticum)).